A 466-amino-acid chain; its full sequence is Ribosome biogenesis protein YTM1 (466 aa).

Residues 8 to 95 (IKINFFTNEE…EASLNLEYTR (88 aa)) form a ubiquitin-like (UBL) domain region. The sufficient for interaction with ERB1 and association with 66S pre-ribosomes stretch occupies residues 105–466 (SFNNDDWISS…QINKGSDITK (362 aa)). WD repeat units lie at residues 120–159 (PLSASVKASNMSISQPKILSGSYDGIVRTYNMSGKVEKQY), 161–199 (GHSGPIRSVKWISPTRIVSSGNDRQVRLWKTSIDSNIED), 214–253 (GHKAPVVSLAVEYQNNRILSAGYDKAIGFWSTNYREMTTI), 291–331 (GHSQ…CVDT), 333–372 (TTGYSLLSLLQLPSLNLLVCGSSARHINLFDPRVSSTTTE), 381–421 (GHTN…SLYT), and 431–466 (KGQDKVFSVIWDNDIGIISGGQDKKIQINKGSDITK).

This sequence belongs to the WD repeat WDR12/YTM1 family. Component of the NOP7 complex, composed of ERB1, NOP7 and YTM1. The complex is held together by ERB1, which interacts with NOP7 via its N-terminal domain and with YTM1 via a high-affinity interaction between the seven-bladed beta-propeller domains of the 2 proteins. The NOP7 complex associates with the 66S pre-ribosome. Interacts (via UBL domain) with MDN1 (via VWFA/MIDAS domain).

It localises to the nucleus. Its subcellular location is the nucleolus. It is found in the nucleoplasm. Component of the NOP7 complex, which is required for maturation of the 25S and 5.8S ribosomal RNAs and formation of the 60S ribosome. The sequence is that of Ribosome biogenesis protein YTM1 from Debaryomyces hansenii (strain ATCC 36239 / CBS 767 / BCRC 21394 / JCM 1990 / NBRC 0083 / IGC 2968) (Yeast).